The chain runs to 305 residues: Glycine--tRNA ligase alpha subunit (305 aa).

Belongs to the class-II aminoacyl-tRNA synthetase family. In terms of assembly, tetramer of two alpha and two beta subunits.

The protein resides in the cytoplasm. The enzyme catalyses tRNA(Gly) + glycine + ATP = glycyl-tRNA(Gly) + AMP + diphosphate. The chain is Glycine--tRNA ligase alpha subunit from Streptococcus pyogenes serotype M49 (strain NZ131).